The primary structure comprises 155 residues: Large ribosomal subunit protein uL22 (155 aa).

This sequence belongs to the universal ribosomal protein uL22 family. As to quaternary structure, part of the 50S ribosomal subunit.

This protein binds specifically to 23S rRNA. It makes multiple contacts with different domains of the 23S rRNA in the assembled 50S subunit and ribosome. In terms of biological role, the globular domain of the protein is located near the polypeptide exit tunnel on the outside of the subunit, while an extended beta-hairpin is found that lines the wall of the exit tunnel in the center of the 70S ribosome. This chain is Large ribosomal subunit protein uL22, found in Archaeoglobus fulgidus (strain ATCC 49558 / DSM 4304 / JCM 9628 / NBRC 100126 / VC-16).